Consider the following 217-residue polypeptide: Twisted gastrulation protein homolog 1-A (217 aa).

The signal sequence occupies residues 1–26 (MRPALFLCPVLISVLFLLSSLSLISG). N-linked (GlcNAc...) asparagine glycans are attached at residues Asn53 and Asn147.

Belongs to the twisted gastrulation protein family.

It is found in the secreted. Involved in dorsal-ventral patterning. Appears to function predominantly as a ventralizing factor, through its actions as a BMP signaling agonist, acting through both chd-dependent and chd-independent mechanisms. May also antagonize BMP signaling, probably via formation of ternary complexes with chd and BMPs, resulting in dorsalization. The sequence is that of Twisted gastrulation protein homolog 1-A (twsg1a) from Danio rerio (Zebrafish).